The sequence spans 354 residues: Guanine nucleotide-binding protein G(i) subunit alpha-1 (354 aa).

The N-myristoyl glycine moiety is linked to residue G2. C3 is lipidated: S-palmitoyl cysteine. Residues 32–354 (REVKLLLLGA…KNNLKDCGLF (323 aa)) form the G-alpha domain. The G1 motif stretch occupies residues 35-48 (KLLLLGAGESGKST). GTP contacts are provided by residues 43 to 48 (ESGKST), 150 to 151 (DS), and 175 to 178 (LRTR). S47 is a binding site for Mg(2+). Residues 173 to 181 (DVLRTRVKT) form a G2 motif region. Mg(2+) is bound at residue T181. Residues 196-205 (FKMFDVGGQR) are G3 motif. GTP-binding positions include 200-204 (DVGGQ), 269-272 (NKKD), and A326. The G4 motif stretch occupies residues 265-272 (ILFLNKKD). Residues 324-329 (TCATDT) form a G5 motif region.

Belongs to the G-alpha family. G(i/o/t/z) subfamily. In terms of assembly, heterotrimeric G proteins are composed of 3 units; alpha, beta and gamma. The alpha chain contains the guanine nucleotide binding site. Part of a spindle orientation complex. Identified in complex with the beta subunit GNB1 and the gamma subunit GNG1. Identified in complex with the beta subunit GNB1 and the gamma subunit GNG2. GTP binding causes dissociation of the heterotrimer, liberating the individual subunits so that they can interact with downstream effector proteins. Post-translationally, myristoylation at Gly-2 is required for membrane anchoring before palmitoylation. Palmitoylation at Cys-3 varies with membrane lipid composition.

Its subcellular location is the nucleus. It is found in the cytoplasm. The protein localises to the cell membrane. The protein resides in the cytoskeleton. It localises to the microtubule organizing center. Its subcellular location is the centrosome. It is found in the cell cortex. The protein localises to the membrane. It carries out the reaction GTP + H2O = GDP + phosphate + H(+). Guanine nucleotide-binding proteins (G proteins) function as transducers downstream of G protein-coupled receptors (GPCRs) in numerous signaling cascades. The alpha chain contains the guanine nucleotide binding site and alternates between an active, GTP-bound state and an inactive, GDP-bound state. Signaling by an activated GPCR promotes GDP release and GTP binding. The alpha subunit has a low GTPase activity that converts bound GTP to GDP, thereby terminating the signal. Both GDP release and GTP hydrolysis are modulated by numerous regulatory proteins. Signaling is mediated via effector proteins, such as adenylate cyclase. Inhibits adenylate cyclase activity of ADCY1, ADCY5 and ADCY6, leading to decreased intracellular cAMP levels. Required for cortical dynein-dynactin complex recruitment during metaphase. In Gallus gallus (Chicken), this protein is Guanine nucleotide-binding protein G(i) subunit alpha-1 (GNAI1).